An 83-amino-acid chain; its full sequence is Hainantoxin-III 8 (83 aa).

The signal sequence occupies residues 1 to 21; the sequence is MKASMFLALAGLVLLFVVGYA. The propeptide occupies 22–48; the sequence is SESEEKEFPRELLSKIFAVDDFTGEER. Cystine bridges form between Cys-50-Cys-65, Cys-57-Cys-70, and Cys-64-Cys-77. Leu-81 is modified (leucine amide).

It belongs to the neurotoxin 10 (Hwtx-1) family. 15 (Hntx-3) subfamily. As to quaternary structure, monomer. In terms of tissue distribution, expressed by the venom gland.

The protein resides in the secreted. Selective antagonist of neuronal tetrodotoxin (TTX)-sensitive voltage-gated sodium channels (IC(50)=1270 nM on Nav1.1/SCN1A, 270 nM on Nav1.2/SCN2A, 491 nM on Nav1.3/SCN3A and 232 nM on Nav1.7/SCN9A). This toxin suppress Nav1.7 current amplitude without significantly altering the activation, inactivation, and repriming kinetics. Short extreme depolarizations partially activate the toxin-bound channel, indicating voltage-dependent inhibition of this toxin. This toxin increases the deactivation of the Nav1.7 current after extreme depolarizations. The toxin-Nav1.7 complex is gradually dissociated upon prolonged strong depolarizations in a voltage-dependent manner, and the unbound toxin rebinds to Nav1.7 after a long repolarization. Moreover, analysis of chimeric channels showed that the DIIS3-S4 linker is critical for toxin binding to Nav1.7. These data are consistent with this toxin interacting with Nav1.7 site 4 and trapping the domain II voltage sensor in the closed state. The sequence is that of Hainantoxin-III 8 from Cyriopagopus hainanus (Chinese bird spider).